The following is a 990-amino-acid chain: Leucine--tRNA ligase (990 aa).

The 'HIGH' region signature appears at 74 to 85 (PYPSGKGLHVGH). Positions 573–602 (LPINLPDVPDYSPKTFDPEDAESDPEAPLS) are disordered. The 'KMSKS' region motif lies at 763 to 767 (KMGKS). Position 766 (lysine 766) interacts with ATP.

Belongs to the class-I aminoacyl-tRNA synthetase family.

It localises to the cytoplasm. It carries out the reaction tRNA(Leu) + L-leucine + ATP = L-leucyl-tRNA(Leu) + AMP + diphosphate. The sequence is that of Leucine--tRNA ligase from Bifidobacterium adolescentis (strain ATCC 15703 / DSM 20083 / NCTC 11814 / E194a).